We begin with the raw amino-acid sequence, 464 residues long: tRNA modification GTPase MnmE (464 aa).

The (6S)-5-formyl-5,6,7,8-tetrahydrofolate site is built by Arg-27, Glu-89, and Arg-128. The TrmE-type G domain maps to 225-384 (GLATAIIGHP…LEDRIAAMFF (160 aa)). Asn-235 contacts K(+). GTP contacts are provided by residues 235 to 240 (NVGKSS), 254 to 260 (TDVAGTT), and 279 to 282 (DTAG). Ser-239 contacts Mg(2+). The K(+) site is built by Thr-254, Val-256, and Thr-259. A Mg(2+)-binding site is contributed by Thr-260. Lys-464 contacts (6S)-5-formyl-5,6,7,8-tetrahydrofolate.

This sequence belongs to the TRAFAC class TrmE-Era-EngA-EngB-Septin-like GTPase superfamily. TrmE GTPase family. Homodimer. Heterotetramer of two MnmE and two MnmG subunits. It depends on K(+) as a cofactor.

The protein resides in the cytoplasm. Its function is as follows. Exhibits a very high intrinsic GTPase hydrolysis rate. Involved in the addition of a carboxymethylaminomethyl (cmnm) group at the wobble position (U34) of certain tRNAs, forming tRNA-cmnm(5)s(2)U34. The chain is tRNA modification GTPase MnmE from Pediococcus pentosaceus (strain ATCC 25745 / CCUG 21536 / LMG 10740 / 183-1w).